Consider the following 189-residue polypeptide: Probable nicotinate-nucleotide adenylyltransferase (189 aa).

It belongs to the NadD family.

It carries out the reaction nicotinate beta-D-ribonucleotide + ATP + H(+) = deamido-NAD(+) + diphosphate. Its pathway is cofactor biosynthesis; NAD(+) biosynthesis; deamido-NAD(+) from nicotinate D-ribonucleotide: step 1/1. Catalyzes the reversible adenylation of nicotinate mononucleotide (NaMN) to nicotinic acid adenine dinucleotide (NaAD). This chain is Probable nicotinate-nucleotide adenylyltransferase, found in Staphylococcus aureus (strain USA300 / TCH1516).